Reading from the N-terminus, the 635-residue chain is Chaperone protein DnaK (635 aa).

A Phosphothreonine; by autocatalysis modification is found at Thr198. Residues 597-635 (LYEQDQANNERHDTPETEKAEGDNVVDAEFQEIDDQDKK) form a disordered region. Positions 604–618 (NNERHDTPETEKAEG) are enriched in basic and acidic residues. A compositionally biased stretch (acidic residues) spans 620-635 (NVVDAEFQEIDDQDKK).

The protein belongs to the heat shock protein 70 family.

Its function is as follows. Acts as a chaperone. In Zymomonas mobilis subsp. mobilis (strain ATCC 31821 / ZM4 / CP4), this protein is Chaperone protein DnaK.